Reading from the N-terminus, the 184-residue chain is ATP-dependent protease subunit HslV (184 aa).

Threonine 12 is a catalytic residue. 3 residues coordinate Na(+): glycine 167, cysteine 170, and threonine 173.

Belongs to the peptidase T1B family. HslV subfamily. As to quaternary structure, a double ring-shaped homohexamer of HslV is capped on each side by a ring-shaped HslU homohexamer. The assembly of the HslU/HslV complex is dependent on binding of ATP.

Its subcellular location is the cytoplasm. It catalyses the reaction ATP-dependent cleavage of peptide bonds with broad specificity.. With respect to regulation, allosterically activated by HslU binding. Functionally, protease subunit of a proteasome-like degradation complex believed to be a general protein degrading machinery. The sequence is that of ATP-dependent protease subunit HslV from Wolbachia sp. subsp. Drosophila simulans (strain wRi).